A 403-amino-acid polypeptide reads, in one-letter code: Major capsid protein (403 aa).

The protein localises to the virion. In terms of biological role, assembles to form an icosahedral capsid. This Staphylococcus aureus protein is Major capsid protein.